Reading from the N-terminus, the 137-residue chain is Large-conductance mechanosensitive channel (137 aa).

The next 2 membrane-spanning stretches (helical) occupy residues 16–36 (VIDLAVGVIIGGAFGKIVDSI) and 83–103 (GNFITVALNFAILAFIIFLMI).

The protein belongs to the MscL family. In terms of assembly, homopentamer.

It localises to the cell inner membrane. Its function is as follows. Channel that opens in response to stretch forces in the membrane lipid bilayer. May participate in the regulation of osmotic pressure changes within the cell. The chain is Large-conductance mechanosensitive channel from Methylibium petroleiphilum (strain ATCC BAA-1232 / LMG 22953 / PM1).